The sequence spans 218 residues: Guanylate kinase (218 aa).

The Guanylate kinase-like domain occupies 15 to 194; sequence GMMLVLSSPS…SIADVRAILR (180 aa). 22 to 29 serves as a coordination point for ATP; that stretch reads SPSGAGKT.

Belongs to the guanylate kinase family.

Its subcellular location is the cytoplasm. The enzyme catalyses GMP + ATP = GDP + ADP. In terms of biological role, essential for recycling GMP and indirectly, cGMP. The protein is Guanylate kinase of Rhodospirillum rubrum (strain ATCC 11170 / ATH 1.1.1 / DSM 467 / LMG 4362 / NCIMB 8255 / S1).